The chain runs to 207 residues: Dephospho-CoA kinase (207 aa).

In terms of domain architecture, DPCK spans 11 to 207 (RIGLTGGIAS…LLKMSPTAEL (197 aa)). 19–24 (ASGKSS) contributes to the ATP binding site.

This sequence belongs to the CoaE family.

It localises to the cytoplasm. It carries out the reaction 3'-dephospho-CoA + ATP = ADP + CoA + H(+). Its pathway is cofactor biosynthesis; coenzyme A biosynthesis; CoA from (R)-pantothenate: step 5/5. In terms of biological role, catalyzes the phosphorylation of the 3'-hydroxyl group of dephosphocoenzyme A to form coenzyme A. The sequence is that of Dephospho-CoA kinase from Synechococcus sp. (strain CC9605).